Reading from the N-terminus, the 414-residue chain is 5-aminolevulinate synthase (414 aa).

The substrate site is built by Arg-22, Ser-133, and Lys-152. Pyridoxal 5'-phosphate-binding residues include Ser-185, His-213, and Thr-241. The active site involves Lys-244. Lys-244 carries the N6-(pyridoxal phosphate)lysine modification. 2 residues coordinate pyridoxal 5'-phosphate: Thr-273 and Thr-274. Thr-359 lines the substrate pocket.

The protein belongs to the class-II pyridoxal-phosphate-dependent aminotransferase family. Homodimer. Pyridoxal 5'-phosphate serves as cofactor.

It catalyses the reaction succinyl-CoA + glycine + H(+) = 5-aminolevulinate + CO2 + CoA. It participates in porphyrin-containing compound metabolism; protoporphyrin-IX biosynthesis; 5-aminolevulinate from glycine: step 1/1. The polypeptide is 5-aminolevulinate synthase (hemA) (Rickettsia conorii (strain ATCC VR-613 / Malish 7)).